A 91-amino-acid polypeptide reads, in one-letter code: Envelope glycoprotein N (91 aa).

The N-terminal stretch at 1–23 (MGPPRRVCRAGLLFVLLVALAAG) is a signal peptide. Residues 23–48 (GDAGPRGEPPGEEGGRDGIGGARCET) form a disordered region. Residues 24-55 (DAGPRGEPPGEEGGRDGIGGARCETQNTGQMS) are Virion surface-facing. The helical transmembrane segment at 56 to 76 (APGALVPFYVGMASMGVCIIA) threads the bilayer. Topologically, residues 77-91 (HVCQICQRLLAAGHA) are intravirion.

Belongs to the herpesviridae glycoprotein N family. As to quaternary structure, interacts (via N-terminus) with gM (via N-terminus). The gM-gN heterodimer forms the gCII complex.

It is found in the virion membrane. Its subcellular location is the host membrane. It localises to the host Golgi apparatus. The protein resides in the host trans-Golgi network. In terms of biological role, envelope glycoprotein necessary for proper maturation of gM and modulation of its membrane fusion activity. Also plays a critical role in virion morphogenesis. The sequence is that of Envelope glycoprotein N from Homo sapiens (Human).